The primary structure comprises 712 residues: Ribosomal RNA large subunit methyltransferase K/L (712 aa).

The region spanning 42–153 is the THUMP domain; it reads QALRIVMWSR…KGRASLSIDL (112 aa).

Belongs to the methyltransferase superfamily. RlmKL family.

It localises to the cytoplasm. It carries out the reaction guanosine(2445) in 23S rRNA + S-adenosyl-L-methionine = N(2)-methylguanosine(2445) in 23S rRNA + S-adenosyl-L-homocysteine + H(+). It catalyses the reaction guanosine(2069) in 23S rRNA + S-adenosyl-L-methionine = N(2)-methylguanosine(2069) in 23S rRNA + S-adenosyl-L-homocysteine + H(+). Specifically methylates the guanine in position 2445 (m2G2445) and the guanine in position 2069 (m7G2069) of 23S rRNA. This is Ribosomal RNA large subunit methyltransferase K/L from Stenotrophomonas maltophilia (strain R551-3).